A 158-amino-acid chain; its full sequence is 2S seed storage albumin protein (158 aa).

The signal sequence occupies residues 1–21 (MTKFTILLISLLFCIAHTCSA). The short motif at 54–56 (RGD) is the Cell attachment site element. Positions 65–81 (NHILRTMRGRINYIRRN) are excised as a propeptide.

This sequence belongs to the 2S seed storage albumins family. As to quaternary structure, the protein consists of two chains linked by 2 disulfide bonds. As to expression, expressed in cotyledons. Maximal expression in parenchyma cells undergoing DNA endoreduplication and cell expansion but not in actively dividing cells of the cotyledon.

Functionally, this is a 2S seed storage protein. In terms of biological role, binds to mammalian chromatin, preventing the normal formation of the kinetochore complex in the centromere and leading to the disruption of mitosis. This is 2S seed storage albumin protein from Glycine max (Soybean).